The chain runs to 221 residues: Cytochrome c biogenesis ATP-binding export protein CcmA (221 aa).

Positions 14–221 (LACHDVSCLR…FDLLDESHFS (208 aa)) constitute an ABC transporter domain. 46-53 (GANGIGKS) is a binding site for ATP.

The protein belongs to the ABC transporter superfamily. CcmA exporter (TC 3.A.1.107) family. In terms of assembly, the complex is composed of two ATP-binding proteins (CcmA) and two transmembrane proteins (CcmB).

The protein resides in the cell inner membrane. The enzyme catalyses heme b(in) + ATP + H2O = heme b(out) + ADP + phosphate + H(+). Functionally, part of the ABC transporter complex CcmAB involved in the biogenesis of c-type cytochromes; once thought to export heme, this seems not to be the case, but its exact role is uncertain. Responsible for energy coupling to the transport system. The protein is Cytochrome c biogenesis ATP-binding export protein CcmA of Zymomonas mobilis subsp. mobilis (strain ATCC 31821 / ZM4 / CP4).